The chain runs to 560 residues: 2-succinyl-5-enolpyruvyl-6-hydroxy-3-cyclohexene-1-carboxylate synthase (560 aa).

Belongs to the TPP enzyme family. MenD subfamily. In terms of assembly, homodimer. Mg(2+) serves as cofactor. The cofactor is Mn(2+). It depends on thiamine diphosphate as a cofactor.

It carries out the reaction isochorismate + 2-oxoglutarate + H(+) = 5-enolpyruvoyl-6-hydroxy-2-succinyl-cyclohex-3-ene-1-carboxylate + CO2. It participates in quinol/quinone metabolism; 1,4-dihydroxy-2-naphthoate biosynthesis; 1,4-dihydroxy-2-naphthoate from chorismate: step 2/7. The protein operates within quinol/quinone metabolism; menaquinone biosynthesis. Its function is as follows. Catalyzes the thiamine diphosphate-dependent decarboxylation of 2-oxoglutarate and the subsequent addition of the resulting succinic semialdehyde-thiamine pyrophosphate anion to isochorismate to yield 2-succinyl-5-enolpyruvyl-6-hydroxy-3-cyclohexene-1-carboxylate (SEPHCHC). The polypeptide is 2-succinyl-5-enolpyruvyl-6-hydroxy-3-cyclohexene-1-carboxylate synthase (Pectobacterium carotovorum subsp. carotovorum (strain PC1)).